The following is a 167-amino-acid chain: Phospholipase A and acyltransferase 1 (167 aa).

The Cytoplasmic segment spans residues 1 to 138; it reads MAVNDCFSLT…GEGVSEQANR (138 aa). In terms of domain architecture, LRAT spans 20-135; that stretch reads LIEVFRPCYQ…LRYGEGVSEQ (116 aa). H30 is an active-site residue. The Acyl-thioester intermediate role is filled by C119. A helical membrane pass occupies residues 139–159; sequence AIGTIGLVAAGIDIFTFLGLF. At 160-167 the chain is on the lumenal side; that stretch reads PKRQGAKS.

The protein belongs to the H-rev107 family.

The protein localises to the membrane. It localises to the cytoplasm. Its subcellular location is the nucleus. The enzyme catalyses a 1,2-diacyl-sn-glycero-3-phosphocholine + H2O = a 1-acyl-sn-glycero-3-phosphocholine + a fatty acid + H(+). It carries out the reaction a 1,2-diacyl-sn-glycero-3-phosphocholine + H2O = a 2-acyl-sn-glycero-3-phosphocholine + a fatty acid + H(+). The catalysed reaction is 1,2-dihexadecanoyl-sn-glycero-3-phosphocholine + H2O = 2-hexadecanoyl-sn-glycero-3-phosphocholine + hexadecanoate + H(+). It catalyses the reaction 1,2-dihexadecanoyl-sn-glycero-3-phosphocholine + H2O = 1-hexadecanoyl-sn-glycero-3-phosphocholine + hexadecanoate + H(+). The enzyme catalyses 1-hexadecanoyl-2-(5Z,8Z,11Z,14Z-eicosatetraenoyl)-sn-glycero-3-phosphoethanolamine + H2O = 2-(5Z,8Z,11Z,14Z)-eicosatetraenoyl-sn-glycero-3-phosphoethanolamine + hexadecanoate + H(+). It carries out the reaction 1-hexadecanoyl-2-(5Z,8Z,11Z,14Z-eicosatetraenoyl)-sn-glycero-3-phosphoethanolamine + H2O = 1-hexadecanoyl-sn-glycero-3-phosphoethanolamine + (5Z,8Z,11Z,14Z)-eicosatetraenoate + H(+). The catalysed reaction is 1,2-di-(9Z-octadecenoyl)-sn-glycero-3-phosphoethanolamine + 1,2-dihexadecanoyl-sn-glycero-3-phosphocholine = hexadecanoyl-sn-glycero-3-phosphocholine + N-hexadecanoyl-1,2-di-(9Z-octadecenoyl)-sn-glycero-3-phosphoethanolamine + H(+). It catalyses the reaction 1,2-dihexadecanoyl-sn-glycero-3-phosphocholine + a 2-acyl-sn-glycero-3-phosphocholine = a 1-hexadecanoyl-2-acyl-sn-glycero-3-phosphocholine + 2-hexadecanoyl-sn-glycero-3-phosphocholine. Functionally, exhibits both phospholipase A1/2 and acyltransferase activities. Shows phospholipase A1 (PLA1) and A2 (PLA2) activity, catalyzing the calcium-independent release of fatty acids from the sn-1 or sn-2 position of glycerophospholipids. Shows O-acyltransferase activity, catalyzing the transfer of a fatty acyl group from glycerophospholipid to the hydroxyl group of lysophospholipid. In Rattus norvegicus (Rat), this protein is Phospholipase A and acyltransferase 1.